The sequence spans 354 residues: Peptide chain release factor 1 (354 aa).

The residue at position 230 (Gln230) is an N5-methylglutamine.

It belongs to the prokaryotic/mitochondrial release factor family. Post-translationally, methylated by PrmC. Methylation increases the termination efficiency of RF1.

It localises to the cytoplasm. In terms of biological role, peptide chain release factor 1 directs the termination of translation in response to the peptide chain termination codons UAG and UAA. This Pelobacter propionicus (strain DSM 2379 / NBRC 103807 / OttBd1) protein is Peptide chain release factor 1.